Consider the following 73-residue polypeptide: Aldehyde dehydrogenase (73 aa).

This sequence belongs to the aldehyde dehydrogenase family.

The catalysed reaction is an aldehyde + NAD(+) + H2O = a carboxylate + NADH + 2 H(+). It functions in the pathway alcohol metabolism; ethanol degradation; acetate from ethanol: step 2/2. The sequence is that of Aldehyde dehydrogenase from Geobacillus stearothermophilus (Bacillus stearothermophilus).